The chain runs to 168 residues: MAQNEELTTEAVEAEENPTSYTSESSAAEAAPKKERPALTVAGAAVGRRKEAVARVRVVPGSGKWTINGRALDNYFPNKLHQQDVNEPFKILDLEGAYDVIARIHGGGISGQAGALRLGIARSLNEIDVENNRATLKKAGYLSRDARVIERKKAGLKKARKAQQYSKR.

The segment covering 1 to 11 has biased composition (low complexity); the sequence is MAQNEELTTEA. Residues 1–36 are disordered; that stretch reads MAQNEELTTEAVEAEENPTSYTSESSAAEAAPKKER.

This sequence belongs to the universal ribosomal protein uS9 family.

The chain is Small ribosomal subunit protein uS9 from Pseudarthrobacter chlorophenolicus (strain ATCC 700700 / DSM 12829 / CIP 107037 / JCM 12360 / KCTC 9906 / NCIMB 13794 / A6) (Arthrobacter chlorophenolicus).